The chain runs to 347 residues: Photosystem II protein D1 (347 aa).

The next 3 helical transmembrane spans lie at 32–49 (YIGW…LATV), 121–136 (HFIL…EWEF), and 145–159 (WIFV…AASA). H121 is a binding site for chlorophyll a. A pheophytin a-binding site is contributed by Y129. [CaMn4O5] cluster contacts are provided by D173 and E192. Residues 200 to 221 (FHILGVAAVFGGSLFSAMHGSL) form a helical membrane-spanning segment. H201 lines the chlorophyll a pocket. Residues H218 and 267-268 (SF) contribute to the a quinone site. Residue H218 participates in Fe cation binding. Position 275 (H275) interacts with Fe cation. The chain crosses the membrane as a helical span at residues 277-291 (FLAAWPVIGIWFTAL). Residues H335, E336, D345, and A347 each coordinate [CaMn4O5] cluster.

The protein belongs to the reaction center PufL/M/PsbA/D family. As to quaternary structure, PSII is composed of 1 copy each of membrane proteins PsbA, PsbB, PsbC, PsbD, PsbE, PsbF, PsbH, PsbI, PsbJ, PsbK, PsbL, PsbM, PsbT, PsbX, PsbY, PsbZ, Psb30/Ycf12, at least 3 peripheral proteins of the oxygen-evolving complex and a large number of cofactors. It forms dimeric complexes. The cofactor is The D1/D2 heterodimer binds P680, chlorophylls that are the primary electron donor of PSII, and subsequent electron acceptors. It shares a non-heme iron and each subunit binds pheophytin, quinone, additional chlorophylls, carotenoids and lipids. D1 provides most of the ligands for the Mn4-Ca-O5 cluster of the oxygen-evolving complex (OEC). There is also a Cl(-1) ion associated with D1 and D2, which is required for oxygen evolution. The PSII complex binds additional chlorophylls, carotenoids and specific lipids.. Tyr-164 forms a radical intermediate that is referred to as redox-active TyrZ, YZ or Y-Z.

Its subcellular location is the plastid. It localises to the chloroplast thylakoid membrane. The enzyme catalyses 2 a plastoquinone + 4 hnu + 2 H2O = 2 a plastoquinol + O2. In terms of biological role, photosystem II (PSII) is a light-driven water:plastoquinone oxidoreductase that uses light energy to abstract electrons from H(2)O, generating O(2) and a proton gradient subsequently used for ATP formation. It consists of a core antenna complex that captures photons, and an electron transfer chain that converts photonic excitation into a charge separation. The D1/D2 (PsbA/PsbD) reaction center heterodimer binds P680, the primary electron donor of PSII as well as several subsequent electron acceptors. The sequence is that of Photosystem II protein D1 from Heterocapsa niei (Dinoflagellate).